The sequence spans 439 residues: Putative myrosinase 3 (439 aa).

The N-terminal stretch at 1–19 (MKFRALGLVLLLAVETCKA) is a signal peptide. The N-linked (GlcNAc...) asparagine glycan is linked to N33. A beta-D-glucoside is bound by residues H145, 190–191 (NQ), and Y316. An N-linked (GlcNAc...) asparagine glycan is attached at N336. Residues E386 and W404 each contribute to the a beta-D-glucoside site. E386 (nucleophile) is an active-site residue.

It belongs to the glycosyl hydrolase 1 family. In terms of tissue distribution, expressed specifically in stamens and petals.

The catalysed reaction is a thioglucoside + H2O = a sugar + a thiol.. In Arabidopsis thaliana (Mouse-ear cress), this protein is Putative myrosinase 3.